The chain runs to 114 residues: MNLILLLVIGFLVFIGTYMILSINLIRIVIGISIYTHAGNLIIMSMGTYGSNKSEPLITGGNQLFVDPLLQAIVLTAIVIGFGMTAFLLVLVYRTYKVTKEDEIEGLRGEDDAK.

3 helical membrane-spanning segments follow: residues 3-23 (LILL…ILSI), 28-48 (IVIG…SMGT), and 72-92 (AIVL…LVLV).

Belongs to the CPA3 antiporters (TC 2.A.63) subunit C family. In terms of assembly, may form a heterooligomeric complex that consists of seven subunits: mnhA2, mnhB2, mnhC2, mnhD2, mnhE2, mnhF2 and mnhG2.

The protein localises to the cell membrane. In Staphylococcus aureus (strain MRSA252), this protein is Putative antiporter subunit mnhC2 (mnhC2).